Reading from the N-terminus, the 339-residue chain is Ribosomal RNA small subunit methyltransferase H (339 aa).

Residues 52 to 54 (GGH), Asp71, Phe98, Asp130, and Gln137 contribute to the S-adenosyl-L-methionine site.

Belongs to the methyltransferase superfamily. RsmH family.

The protein localises to the cytoplasm. It carries out the reaction cytidine(1402) in 16S rRNA + S-adenosyl-L-methionine = N(4)-methylcytidine(1402) in 16S rRNA + S-adenosyl-L-homocysteine + H(+). Specifically methylates the N4 position of cytidine in position 1402 (C1402) of 16S rRNA. In Corynebacterium diphtheriae (strain ATCC 700971 / NCTC 13129 / Biotype gravis), this protein is Ribosomal RNA small subunit methyltransferase H.